The following is a 924-amino-acid chain: Mediator of RNA polymerase II transcription subunit 16 (924 aa).

Belongs to the Mediator complex subunit 16 family. In terms of assembly, component of the Mediator complex.

Its subcellular location is the nucleus. Functionally, component of the Mediator complex, a coactivator involved in the regulated transcription of nearly all RNA polymerase II-dependent genes. Mediator functions as a bridge to convey information from gene-specific regulatory proteins to the basal RNA polymerase II transcription machinery. Mediator is recruited to promoters by direct interactions with regulatory proteins and serves as a scaffold for the assembly of a functional preinitiation complex with RNA polymerase II and the general transcription factors. The sequence is that of Mediator of RNA polymerase II transcription subunit 16 (SIN4) from Yarrowia lipolytica (strain CLIB 122 / E 150) (Yeast).